The sequence spans 548 residues: Protein GPR108 (548 aa).

Positions 1–32 (MAVSERRGLGRGSPAEWGPWLLLLLLLGGSSG) are cleaved as a signal peptide. N-linked (GlcNAc...) asparagine glycans are attached at residues N57, N63, and N109. The interval 165 to 190 (DHAGTTAAPDKAKSKPTGLQGDRQGV) is disordered. N205 and N209 each carry an N-linked (GlcNAc...) asparagine glycan. A run of 7 helical transmembrane segments spans residues 268–288 (LYMV…SILC), 297–317 (IHWL…FHSI), 341–361 (LLKG…WAFV), 372–392 (IFGI…VMES), 406–426 (ILFL…VWSI), 454–474 (VMVI…RAVV), and 478–498 (WQWL…VLTG). N539 carries N-linked (GlcNAc...) asparagine glycosylation.

The protein belongs to the LU7TM family.

The protein localises to the golgi apparatus. It localises to the cis-Golgi network membrane. The protein resides in the trans-Golgi network membrane. It is found in the golgi apparatus membrane. May play a role in intracellular immune modulation by activating NF-kappaB response and attenuating Toll-like-receptor response. The sequence is that of Protein GPR108 (GPR108) from Bos taurus (Bovine).